Reading from the N-terminus, the 565-residue chain is Membrane protein insertase YidC (565 aa).

Transmembrane regions (helical) follow at residues 6–26 (VLLIFSWLTVATLLWMDWGKN), 348–368 (LMALIGQGLFWILSHLNSLLH), 370–390 (WGWAIVGLVVLLRIAMYPLSA), 437–457 (GGCFPILIQMPIFFALYWVLV), 479–499 (PYFILPLLNIVIMWATQKLTP), and 516–536 (PLIFGVMMAFVPSGLALYWVI).

Belongs to the OXA1/ALB3/YidC family. Type 1 subfamily. As to quaternary structure, interacts with the Sec translocase complex via SecD. Specifically interacts with transmembrane segments of nascent integral membrane proteins during membrane integration.

The protein resides in the cell inner membrane. Its function is as follows. Required for the insertion and/or proper folding and/or complex formation of integral membrane proteins into the membrane. Involved in integration of membrane proteins that insert both dependently and independently of the Sec translocase complex, as well as at least some lipoproteins. Aids folding of multispanning membrane proteins. The polypeptide is Membrane protein insertase YidC (Xylella fastidiosa (strain 9a5c)).